The following is a 295-amino-acid chain: Ribosomal RNA small subunit methyltransferase A (295 aa).

Positions 29, 31, 56, 77, 102, and 128 each coordinate S-adenosyl-L-methionine.

The protein belongs to the class I-like SAM-binding methyltransferase superfamily. rRNA adenine N(6)-methyltransferase family. RsmA subfamily.

The protein localises to the cytoplasm. The enzyme catalyses adenosine(1518)/adenosine(1519) in 16S rRNA + 4 S-adenosyl-L-methionine = N(6)-dimethyladenosine(1518)/N(6)-dimethyladenosine(1519) in 16S rRNA + 4 S-adenosyl-L-homocysteine + 4 H(+). Functionally, specifically dimethylates two adjacent adenosines (A1518 and A1519) in the loop of a conserved hairpin near the 3'-end of 16S rRNA in the 30S particle. May play a critical role in biogenesis of 30S subunits. The polypeptide is Ribosomal RNA small subunit methyltransferase A (Listeria monocytogenes serotype 4a (strain HCC23)).